The following is a 375-amino-acid chain: Queuine tRNA-ribosyltransferase (375 aa).

Asp93 (proton acceptor) is an active-site residue. Substrate contacts are provided by residues 93–97 (DSGGY), Asp147, Gln194, and Gly221. Positions 252-258 (GVGKPDD) are RNA binding. Asp271 (nucleophile) is an active-site residue. The tract at residues 276–280 (TRSGR) is RNA binding; important for wobble base 34 recognition. Cys309, Cys311, Cys314, and His340 together coordinate Zn(2+).

This sequence belongs to the queuine tRNA-ribosyltransferase family. As to quaternary structure, homodimer. Within each dimer, one monomer is responsible for RNA recognition and catalysis, while the other monomer binds to the replacement base PreQ1. Requires Zn(2+) as cofactor.

It catalyses the reaction 7-aminomethyl-7-carbaguanine + guanosine(34) in tRNA = 7-aminomethyl-7-carbaguanosine(34) in tRNA + guanine. It functions in the pathway tRNA modification; tRNA-queuosine biosynthesis. Catalyzes the base-exchange of a guanine (G) residue with the queuine precursor 7-aminomethyl-7-deazaguanine (PreQ1) at position 34 (anticodon wobble position) in tRNAs with GU(N) anticodons (tRNA-Asp, -Asn, -His and -Tyr). Catalysis occurs through a double-displacement mechanism. The nucleophile active site attacks the C1' of nucleotide 34 to detach the guanine base from the RNA, forming a covalent enzyme-RNA intermediate. The proton acceptor active site deprotonates the incoming PreQ1, allowing a nucleophilic attack on the C1' of the ribose to form the product. After dissociation, two additional enzymatic reactions on the tRNA convert PreQ1 to queuine (Q), resulting in the hypermodified nucleoside queuosine (7-(((4,5-cis-dihydroxy-2-cyclopenten-1-yl)amino)methyl)-7-deazaguanosine). This chain is Queuine tRNA-ribosyltransferase, found in Sphingopyxis alaskensis (strain DSM 13593 / LMG 18877 / RB2256) (Sphingomonas alaskensis).